The sequence spans 456 residues: Exodeoxyribonuclease 7 large subunit (456 aa).

It belongs to the XseA family. In terms of assembly, heterooligomer composed of large and small subunits.

Its subcellular location is the cytoplasm. It catalyses the reaction Exonucleolytic cleavage in either 5'- to 3'- or 3'- to 5'-direction to yield nucleoside 5'-phosphates.. Bidirectionally degrades single-stranded DNA into large acid-insoluble oligonucleotides, which are then degraded further into small acid-soluble oligonucleotides. This Escherichia coli (strain SE11) protein is Exodeoxyribonuclease 7 large subunit.